The chain runs to 257 residues: Snake venom serine protease 3 (257 aa).

Positions 1–18 (MVLIRVLANLLILQLSYA) are cleaved as a signal peptide. Residues 19 to 24 (QKSSEL) constitute a propeptide that is removed on maturation. The 224-residue stretch at 25 to 248 (VIGGDECNIN…YTDWIQNIIA (224 aa)) folds into the Peptidase S1 domain. Intrachain disulfides connect Cys-31/Cys-163, Cys-50/Cys-66, Cys-98/Cys-255, Cys-142/Cys-209, Cys-174/Cys-188, and Cys-199/Cys-224. A glycan (N-linked (GlcNAc...) asparagine) is linked at Asn-44. Catalysis depends on His-65, which acts as the Charge relay system. Residue Asn-103 is glycosylated (N-linked (GlcNAc...) asparagine). Asp-110 serves as the catalytic Charge relay system. 2 N-linked (GlcNAc...) asparagine glycosylation sites follow: Asn-117 and Asn-154. Ser-203 functions as the Charge relay system in the catalytic mechanism. Asn-250 carries N-linked (GlcNAc...) asparagine glycosylation.

The protein belongs to the peptidase S1 family. Snake venom subfamily. As to quaternary structure, monomer. In terms of tissue distribution, expressed by the venom gland.

It is found in the secreted. Its function is as follows. Snake venom serine protease that may act in the hemostasis system of the prey. This chain is Snake venom serine protease 3 (TLF3), found in Protobothrops flavoviridis (Habu).